Here is a 394-residue protein sequence, read N- to C-terminus: GDP-mannose transporter (394 aa).

Residues 1–55 (MADKKNEDFVVRMPDNGTVEKEPFLARSPPARARTGSGGGFGDSFSLARVANNPP) lie on the Cytoplasmic side of the membrane. A helical membrane pass occupies residues 56–76 (AAILAYCLSSISMTVVNKYVV). Topologically, residues 77-80 (SGSE) are lumenal. A helical transmembrane segment spans residues 81 to 101 (WNLNFFYLAVQAIVCIIAILF). Topologically, residues 102–121 (CKQIGIITNLAPFDNVKAKK) are cytoplasmic. A helical membrane pass occupies residues 122–144 (WFPVSLLLVGMIYTSTKALQFLS). Topologically, residues 145 to 149 (VPVYT) are lumenal. Residues 150-167 (IFKNLTIIAIAYGEVLWF) form a helical membrane-spanning segment. At 168-173 (GGSVSP) the chain is on the cytoplasmic side. Residues 174–198 (LALVSFGLMVLSSVVAAWADIQSAI) traverse the membrane as a helical segment. Topologically, residues 199–213 (HGGSHPSEASTAIST) are lumenal. Residues 214–234 (LNAGYAWMGMNVFCSAAYLLG) form a helical membrane-spanning segment. Topologically, residues 235-246 (MRKVIHKMNFKD) are cytoplasmic. A helical transmembrane segment spans residues 247–267 (WDSMFYNNLLTIPVLIVCSLI). The Lumenal portion of the chain corresponds to 268-287 (AEDWSAANLARNFPIESRNA). The chain crosses the membrane as a helical span at residues 288 to 308 (LFIGMIYSGLGAIFISYCSAW). Residues 309–316 (CIRVTTST) are Cytoplasmic-facing. The chain crosses the membrane as a helical span at residues 317-339 (TYSMVGALNKLPIAISGLVFFSA). At 340–342 (PVT) the chain is on the lumenal side. Residues 343–362 (FGSVSAIVIGFISGIVYAWA) form a helical membrane-spanning segment. Residues 363–394 (KARQSSQAKSALPTQQPVMSASSQSNKDASNS) lie on the Cytoplasmic side of the membrane. Residues 371 to 394 (KSALPTQQPVMSASSQSNKDASNS) form a disordered region. A compositionally biased stretch (polar residues) spans 374 to 394 (LPTQQPVMSASSQSNKDASNS).

It belongs to the TPT transporter family. SLC35D subfamily. In terms of assembly, homooligomer.

The protein resides in the golgi apparatus membrane. It localises to the cytoplasmic vesicle membrane. The protein localises to the endoplasmic reticulum membrane. Involved in the import of GDP-mannose from the cytoplasm into the Golgi lumen. This Pyricularia oryzae (strain 70-15 / ATCC MYA-4617 / FGSC 8958) (Rice blast fungus) protein is GDP-mannose transporter (VRG4).